A 1070-amino-acid polypeptide reads, in one-letter code: DNA-directed RNA polymerase subunit beta (1070 aa).

This sequence belongs to the RNA polymerase beta chain family. In terms of assembly, in plastids the minimal PEP RNA polymerase catalytic core is composed of four subunits: alpha, beta, beta', and beta''. When a (nuclear-encoded) sigma factor is associated with the core the holoenzyme is formed, which can initiate transcription.

The protein localises to the plastid. The protein resides in the chloroplast. The enzyme catalyses RNA(n) + a ribonucleoside 5'-triphosphate = RNA(n+1) + diphosphate. Its function is as follows. DNA-dependent RNA polymerase catalyzes the transcription of DNA into RNA using the four ribonucleoside triphosphates as substrates. This chain is DNA-directed RNA polymerase subunit beta, found in Nicotiana sylvestris (Wood tobacco).